Here is a 359-residue protein sequence, read N- to C-terminus: Guanine nucleotide-binding protein-like alpha-11 subunit (359 aa).

Residue Gly2 is the site of N-myristoyl glycine attachment. The G-alpha domain maps to 29-359 (KLIKILMMGN…YVKKILEDTI (331 aa)). Residues 32 to 45 (KILMMGNENSAKST) form a G1 motif region. Ser44 serves as a coordination point for Mg(2+). Residues 176 to 185 (DIIRCSKNNQ) form a G2 motif region. Residues 178–185 (IRCSKNNQ), 204–208 (DTGNQ), and 281–284 (NKKE) contribute to the GTP site. A G3 motif region spans residues 200-209 (FVFVDTGNQK). The interval 277–284 (IVLFNKKE) is G4 motif. Residues 337 to 342 (FNSSDT) form a G5 motif region.

This sequence belongs to the G-alpha family.

The polypeptide is Guanine nucleotide-binding protein-like alpha-11 subunit (gpaK) (Dictyostelium discoideum (Social amoeba)).